A 314-amino-acid chain; its full sequence is Ribosomal protein L11 methyltransferase (314 aa).

The S-adenosyl-L-methionine site is built by T161, G182, D204, and N248.

Belongs to the methyltransferase superfamily. PrmA family.

The protein resides in the cytoplasm. The enzyme catalyses L-lysyl-[protein] + 3 S-adenosyl-L-methionine = N(6),N(6),N(6)-trimethyl-L-lysyl-[protein] + 3 S-adenosyl-L-homocysteine + 3 H(+). Methylates ribosomal protein L11. The chain is Ribosomal protein L11 methyltransferase from Listeria monocytogenes serotype 1/2a (strain 10403S).